Here is a 218-residue protein sequence, read N- to C-terminus: Probable nicotinate-nucleotide adenylyltransferase (218 aa).

It belongs to the NadD family.

It carries out the reaction nicotinate beta-D-ribonucleotide + ATP + H(+) = deamido-NAD(+) + diphosphate. Its pathway is cofactor biosynthesis; NAD(+) biosynthesis; deamido-NAD(+) from nicotinate D-ribonucleotide: step 1/1. Functionally, catalyzes the reversible adenylation of nicotinate mononucleotide (NaMN) to nicotinic acid adenine dinucleotide (NaAD). The protein is Probable nicotinate-nucleotide adenylyltransferase of Halorhodospira halophila (strain DSM 244 / SL1) (Ectothiorhodospira halophila (strain DSM 244 / SL1)).